The following is a 216-amino-acid chain: Adenylate kinase (216 aa).

10–15 lines the ATP pocket; that stretch reads GAGKGT. The tract at residues 30–59 is NMP; it reads STGDMFRAAMKAETELGLQAKSFIDKGALV. AMP-binding positions include T31, R36, 57–59, 85–88, and Q92; these read ALV and GFPR. Residues 126–163 are LID; the sequence is GRRICKECGATYHLEFNPPAKADVCDKCGGELYQRSDD. R127 contributes to the ATP binding site. Positions 130 and 133 each coordinate Zn(2+). ATP is bound at residue 136–137; that stretch reads TY. Residues C150 and C153 each contribute to the Zn(2+) site. The AMP site is built by R160 and R171. An ATP-binding site is contributed by Q199.

The protein belongs to the adenylate kinase family. In terms of assembly, monomer.

The protein localises to the cytoplasm. It carries out the reaction AMP + ATP = 2 ADP. It functions in the pathway purine metabolism; AMP biosynthesis via salvage pathway; AMP from ADP: step 1/1. Functionally, catalyzes the reversible transfer of the terminal phosphate group between ATP and AMP. Plays an important role in cellular energy homeostasis and in adenine nucleotide metabolism. The polypeptide is Adenylate kinase (Bacillus mycoides (strain KBAB4) (Bacillus weihenstephanensis)).